The following is a 268-amino-acid chain: GTP cyclohydrolase 1 type 2 homolog (268 aa).

A divalent metal cation is bound by residues H66, H67, D105, H227, and E231.

It belongs to the GTP cyclohydrolase I type 2/NIF3 family. Homohexamer.

In Clostridium acetobutylicum (strain ATCC 824 / DSM 792 / JCM 1419 / IAM 19013 / LMG 5710 / NBRC 13948 / NRRL B-527 / VKM B-1787 / 2291 / W), this protein is GTP cyclohydrolase 1 type 2 homolog.